A 376-amino-acid polypeptide reads, in one-letter code: Arabinogalactan endo-beta-1,4-galactanase (376 aa).

Positions M1–A17 are cleaved as a signal peptide. E161 (proton donor) is an active-site residue. The Nucleophile role is filled by E270. Ca(2+)-binding residues include D281 and N285.

It belongs to the glycosyl hydrolase 53 family. The cofactor is Ca(2+).

It catalyses the reaction The enzyme specifically hydrolyzes (1-&gt;4)-beta-D-galactosidic linkages in type I arabinogalactans.. The chain is Arabinogalactan endo-beta-1,4-galactanase (ganB) from Cellvibrio japonicus (strain Ueda107) (Pseudomonas fluorescens subsp. cellulosa).